We begin with the raw amino-acid sequence, 72 residues long: UPF0154 protein RBAM_017710 (72 aa).

A helical membrane pass occupies residues 4–24 (WVGILVGVVALLIGVALGFFI).

Belongs to the UPF0154 family.

The protein localises to the cell membrane. The protein is UPF0154 protein RBAM_017710 of Bacillus velezensis (strain DSM 23117 / BGSC 10A6 / LMG 26770 / FZB42) (Bacillus amyloliquefaciens subsp. plantarum).